We begin with the raw amino-acid sequence, 475 residues long: Glucose-6-phosphate 1-dehydrogenase gcd1 (475 aa).

Arg42 and Lys146 together coordinate NADP(+). D-glucose 6-phosphate contacts are provided by Lys146, Glu214, and Asp233. Catalysis depends on His238, which acts as the Proton acceptor. Lys332 is a D-glucose 6-phosphate binding site. Positions 342 and 365 each coordinate NADP(+).

Belongs to the glucose-6-phosphate dehydrogenase family.

Its subcellular location is the cytoplasm. The catalysed reaction is D-glucose 6-phosphate + NADP(+) = 6-phospho-D-glucono-1,5-lactone + NADPH + H(+). It participates in carbohydrate degradation; pentose phosphate pathway; D-ribulose 5-phosphate from D-glucose 6-phosphate (oxidative stage): step 1/3. Catalyzes the rate-limiting step of the oxidative pentose-phosphate pathway, which represents a route for the dissimilation of carbohydrates besides glycolysis. The main function of this enzyme is to provide reducing power (NADPH) and pentose phosphates for fatty acid and nucleic acid synthesis. This Schizosaccharomyces pombe (strain 972 / ATCC 24843) (Fission yeast) protein is Glucose-6-phosphate 1-dehydrogenase gcd1.